Here is a 795-residue protein sequence, read N- to C-terminus: Lon protease (795 aa).

Residues 17-214 form the Lon N-terminal domain; it reads YPLMPLRDIV…KVYKFLQDEI (198 aa). 370-377 serves as a coordination point for ATP; that stretch reads GPPGVGKT. Positions 605 to 787 constitute a Lon proteolytic domain; that stretch reads KPLVGVATGL…EEVFKIALVR (183 aa). Catalysis depends on residues Ser-692 and Lys-735.

The protein belongs to the peptidase S16 family. Homohexamer. Organized in a ring with a central cavity.

The protein localises to the cytoplasm. The catalysed reaction is Hydrolysis of proteins in presence of ATP.. ATP-dependent serine protease that mediates the selective degradation of mutant and abnormal proteins as well as certain short-lived regulatory proteins. Required for cellular homeostasis and for survival from DNA damage and developmental changes induced by stress. Degrades polypeptides processively to yield small peptide fragments that are 5 to 10 amino acids long. Binds to DNA in a double-stranded, site-specific manner. This chain is Lon protease, found in Aquifex aeolicus (strain VF5).